The following is a 783-amino-acid chain: MAACRYCCSCLRLRPLSDGPFCLPGRDRALTQLLVRALWSSTGSRAVAVDLGNRKLEISSGKLARFADGSAVVQSGDTAVMVTAVSKTKPSPSQFMPLVVDYRQKAAAAGRIPTNYLRREIGTSDKEILTSRIIDRSIRPLFPAGYFYDTQVLCNLLAVDGVNEPDVLAINGASVALSLSDIPWNGPVGAVRIGIIDGECVVNPTRKEMSSSTLNLVVAGAPKSQIVMLEASAENILQQDFCHAIKVGVKYTQQIIQGIQQLVKETGVTKRTPQKLFTPSPEIVKHTHKLAMERLYAVFTDYEHDKVSRDEAVNKIRLDTEEQLKEKFPQADPYEIIESFNVVAKEVFRNIILNEYKRCDGRDLTSLRNVSCEVDMFKTLHGSALFQRGQTQVLCTVTFDSLESGIKSDQVITAINGIKDKNFMLHYEFPPYATNEIGKVTGLNRRELGHGALAEKALYPVIPRDFPFTIRVTSEVLESNGSSSMASACGGSLALMDSGVPISSAVAGVAIGLVTKTDPEKGEIEDYRLLTDILGIEDYNGDMDFKIAGTNKGITALQADIKLPGIPIKIVMEAIQQASVAKKEILQIMNKTISKPRTSRKENGPVVETVQVPLSKRAKFVGPGGYNLKKLQAETGVTISQVDEETFSVFAPTPSALHEARDFITEICKDDQEQQLEFGAVYTATITEIRDTGVMVKLYPNMTAVLLHNTQLDQRKIRHPTALGLEVGQEIQVKYFGRDPADGRMRLSRKVLQSPATTVVRTLNDRSSIVMGEPISQSSSNSQ.

The N-terminal 46 residues, Met1–Ala46, are a transit peptide targeting the mitochondrion. Residues Lys250, Lys264, Lys285, and Lys289 each carry the N6-acetyllysine modification. Lys552 bears the N6-succinyllysine mark. The KH domain maps to Pro605–Ile664. An S1 motif domain is found at Gly679–Lys750. Phosphoserine occurs at positions 754 and 782.

It belongs to the polyribonucleotide nucleotidyltransferase family. As to quaternary structure, homotrimer; in free form. Homooligomer. Component of the mitochondrial degradosome (mtEXO) complex which is a heteropentamer containing 2 copies of SUPV3L1 and 3 copies of PNPT1. As part of the mitochondrial degradosome complex, interacts with GRSF1 in an RNA-dependent manner; the interaction enhances the activity of the complex. Interacts with TCL1A; the interaction has no effect on PNPT1 exonuclease activity.

The protein resides in the cytoplasm. It is found in the mitochondrion matrix. It localises to the mitochondrion intermembrane space. The catalysed reaction is RNA(n+1) + phosphate = RNA(n) + a ribonucleoside 5'-diphosphate. RNA-binding protein implicated in numerous RNA metabolic processes. Catalyzes the phosphorolysis of single-stranded polyribonucleotides processively in the 3'-to-5' direction. Mitochondrial intermembrane factor with RNA-processing exoribonulease activity. Component of the mitochondrial degradosome (mtEXO) complex, that degrades 3' overhang double-stranded RNA with a 3'-to-5' directionality in an ATP-dependent manner. Involved in the degradation of non-coding mitochondrial transcripts (MT-ncRNA) and tRNA-like molecules. Required for correct processing and polyadenylation of mitochondrial mRNAs. Plays a role as a cytoplasmic RNA import factor that mediates the translocation of small RNA components like the 5S RNA, the RNA subunit of ribonuclease P and the mitochondrial RNA-processing (MRP) RNA, into the mitochondrial matrix. Plays a role in mitochondrial morphogenesis and respiration; regulates the expression of the electron transport chain (ETC) components at the mRNA and protein levels. In the cytoplasm, shows a 3'-to-5' exoribonuclease mediating mRNA degradation activity; degrades c-myc mRNA upon treatment with IFNB1/IFN-beta, resulting in a growth arrest in melanoma cells. Regulates the stability of specific mature miRNAs in melanoma cells; specifically and selectively degrades miR-221, preferentially. Also plays a role in RNA cell surveillance by cleaning up oxidized RNAs. Binds to the RNA subunit of ribonuclease P, MRP RNA and miR-221 microRNA. This Pongo abelii (Sumatran orangutan) protein is Polyribonucleotide nucleotidyltransferase 1, mitochondrial (PNPT1).